A 134-amino-acid polypeptide reads, in one-letter code: Loki profilin-2 (134 aa).

Residues 55-62 (LALGEKGI) form a loki loop region.

Belongs to the Asgard profilin family.

It is found in the cytoplasm. It localises to the cytoskeleton. With respect to regulation, inhibition of rabbit actin polymerization is reduced by phosphatidylinositol-(4,5)-P2(1,2-dipalmitoyl), a soluble form of the phospholipid phosphatidylinositol, suggesting an unknown lipid might regulate actin-profilin interaction in vivo. Its function is as follows. Binds to actin and affects the structure of the cytoskeleton. At high concentrations inhibits spontaneous rabbit actin nucleation. This strongly suggests this archaea has a profilin-regulated actin system, and actin-type genes can be identified in this organism. This Lokiarchaeum sp. (strain GC14_75) protein is Loki profilin-2.